Here is a 238-residue protein sequence, read N- to C-terminus: Ribonuclease PH (238 aa).

Phosphate-binding positions include R86 and G124 to R126.

Belongs to the RNase PH family. As to quaternary structure, homohexameric ring arranged as a trimer of dimers.

The catalysed reaction is tRNA(n+1) + phosphate = tRNA(n) + a ribonucleoside 5'-diphosphate. Functionally, phosphorolytic 3'-5' exoribonuclease that plays an important role in tRNA 3'-end maturation. Removes nucleotide residues following the 3'-CCA terminus of tRNAs; can also add nucleotides to the ends of RNA molecules by using nucleoside diphosphates as substrates, but this may not be physiologically important. Probably plays a role in initiation of 16S rRNA degradation (leading to ribosome degradation) during starvation. This chain is Ribonuclease PH, found in Aliivibrio fischeri (strain ATCC 700601 / ES114) (Vibrio fischeri).